Reading from the N-terminus, the 143-residue chain is Sporulation-specific cell division protein SsgB (143 aa).

This sequence belongs to the SsgA family. As to quaternary structure, interacts with SsgA. Interacts with FtsZ (via N-terminus).

It localises to the cell septum. Involved in sporulation-specific cell division. Required for early stages of sporulation. Important in the process of growth cessation prior to sporulation-specific cell division. Recruits cell division protein FtsZ to the future septum sites and tethers the contractile ring structure (Z ring) to the cytoplasmic membrane during sporulation. Stimulates polymerization and filament length of FtsZ in vitro. The polypeptide is Sporulation-specific cell division protein SsgB (Frankia casuarinae (strain DSM 45818 / CECT 9043 / HFP020203 / CcI3)).